Consider the following 802-residue polypeptide: Ribosome-releasing factor 2, mitochondrial (802 aa).

Positions 13 to 297 (KKIRNIGIIA…AVVDFLPSPA (285 aa)) constitute a tr-type G domain. GTP contacts are provided by residues 22–29 (AHIDAGKT), 86–90 (DTPGH), and 140–143 (NKMD).

The protein belongs to the TRAFAC class translation factor GTPase superfamily. Classic translation factor GTPase family. EF-G/EF-2 subfamily.

The protein localises to the mitochondrion. In terms of biological role, mitochondrial GTPase that mediates the disassembly of ribosomes from messenger RNA at the termination of mitochondrial protein biosynthesis. Not involved in the GTP-dependent ribosomal translocation step during translation elongation. This is Ribosome-releasing factor 2, mitochondrial from Yarrowia lipolytica (strain CLIB 122 / E 150) (Yeast).